The sequence spans 248 residues: Probable transcriptional regulatory protein BRADO1143 (248 aa).

This sequence belongs to the TACO1 family.

It is found in the cytoplasm. The protein is Probable transcriptional regulatory protein BRADO1143 of Bradyrhizobium sp. (strain ORS 278).